The following is a 1088-amino-acid chain: RNA-directed RNA polymerase (1088 aa).

The RdRp catalytic domain occupies 501–687 (LSYGDVTRFL…AKRYIAGGKI (187 aa)).

This sequence belongs to the reoviridae RNA-directed RNA polymerase family. Interacts with VP3 (Potential). Interacts with VP2; this interaction activates VP1. Interacts with NSP5; this interaction is probably necessary for the formation of functional virus factories. Interacts with NSP2; this interaction is weak. The cofactor is Mg(2+).

Its subcellular location is the virion. It catalyses the reaction RNA(n) + a ribonucleoside 5'-triphosphate = RNA(n+1) + diphosphate. Functionally, RNA-directed RNA polymerase that is involved in both transcription and genome replication. Together with VP3 capping enzyme, forms an enzyme complex positioned near the channels situated at each of the five-fold vertices of the core. Following infection, the outermost layer of the virus is lost, leaving a double-layered particle (DLP) made up of the core and VP6 shell. VP1 then catalyzes the transcription of fully conservative plus-strand genomic RNAs that are extruded through the DLP's channels into the cytoplasm where they function as mRNAs for translation of viral proteins. One copy of each of the viral (+)RNAs is also recruited during core assembly, together with newly synthesized polymerase complexes and VP2. The polymerase of these novo-formed particles catalyzes the synthesis of complementary minus-strands leading to dsRNA formation. To do so, the polymerase specifically recognizes and binds 4 bases 5'-UGUG-3' in the conserved 3'-sequence of plus-strand RNA templates. VP2 presumably activates the autoinhibited VP1-RNA complex to coordinate packaging and genome replication. Once dsRNA synthesis is complete, the polymerase switches to the transcriptional mode, thus providing secondary transcription. The chain is RNA-directed RNA polymerase from Rotavirus A (strain RVA/Human/United States/Wa/1974/G1P1A[8]) (RV-A).